The sequence spans 160 residues: Deoxyuridine 5'-triphosphate nucleotidohydrolase (160 aa).

Substrate is bound by residues Arg-76–Gly-78, Asn-89, and Thr-93–Asp-95. A compositionally biased stretch (basic and acidic residues) spans His-139–Asp-149. Residues His-139 to Gln-160 are disordered. Residues Gly-150–Gln-160 show a composition bias toward gly residues.

It belongs to the dUTPase family. Requires Mg(2+) as cofactor.

It catalyses the reaction dUTP + H2O = dUMP + diphosphate + H(+). It participates in pyrimidine metabolism; dUMP biosynthesis; dUMP from dCTP (dUTP route): step 2/2. This enzyme is involved in nucleotide metabolism: it produces dUMP, the immediate precursor of thymidine nucleotides and it decreases the intracellular concentration of dUTP so that uracil cannot be incorporated into DNA. This Beijerinckia indica subsp. indica (strain ATCC 9039 / DSM 1715 / NCIMB 8712) protein is Deoxyuridine 5'-triphosphate nucleotidohydrolase.